Reading from the N-terminus, the 274-residue chain is Large ribosomal subunit protein uL2 (274 aa).

The disordered stretch occupies residues 222–257 (GVAMNPVDHPHGGGEGRTSGGRHPVSPWGVPTKGYK).

It belongs to the universal ribosomal protein uL2 family. Part of the 50S ribosomal subunit. Forms a bridge to the 30S subunit in the 70S ribosome.

Its function is as follows. One of the primary rRNA binding proteins. Required for association of the 30S and 50S subunits to form the 70S ribosome, for tRNA binding and peptide bond formation. It has been suggested to have peptidyltransferase activity; this is somewhat controversial. Makes several contacts with the 16S rRNA in the 70S ribosome. In Nitrosococcus oceani (strain ATCC 19707 / BCRC 17464 / JCM 30415 / NCIMB 11848 / C-107), this protein is Large ribosomal subunit protein uL2.